The sequence spans 384 residues: Probable peptidoglycan glycosyltransferase FtsW (384 aa).

The Cytoplasmic portion of the chain corresponds to 1 to 19 (MAAVWRWFVPERPSFYDRG). Residues 20–40 (LLALTFSLMGIGLMMVASASI) traverse the membrane as a helical segment. Over 41–54 (KEGPGGDMFYFTKR) the chain is Periplasmic. The helical transmembrane segment at 55 to 75 (HLIFLFVCLGIGVGTLYLPLE) threads the bilayer. Residues 76–83 (RWREWSGR) are Cytoplasmic-facing. Residues 84-104 (LLVGALGLLFAVLAVGRTVNG) traverse the membrane as a helical segment. The Periplasmic segment spans residues 105-110 (AKRWIG). Residues 111–131 (FGFFNIQPAELAKLALIVFIA) form a helical membrane-spanning segment. Residues 132-143 (SYLVRRSDEVRG) lie on the Cytoplasmic side of the membrane. A helical transmembrane segment spans residues 144-164 (NIAGFVKPLAVVFLLAIMLLA). The Periplasmic segment spans residues 165–166 (QP). A helical membrane pass occupies residues 167-187 (DLGSVVVLFVCTFGLLFIGGA). Lysine 188 is a topological domain (cytoplasmic). A helical membrane pass occupies residues 189-209 (LVQFIAIIVAGLSALAGLIIY). The Periplasmic segment spans residues 210 to 267 (EPYRLRRVTSFLDPWADPFGSGYQLTQSLMAFGRGGFFGQGLGNSVQKLSYLPEAHTD). Residues 268-288 (FVFAILGEELGYFGVLVVLFL) traverse the membrane as a helical segment. The Cytoplasmic portion of the chain corresponds to 289–316 (QLLLAMKALQIGRTALLRSKFFEGYMAC). A helical membrane pass occupies residues 317-337 (GIGIWFSFQTVVNVGAAAGML). Residues 338 to 343 (PTKGLT) lie on the Periplasmic side of the membrane. A helical transmembrane segment spans residues 344 to 364 (LPLVSYGGSSLIAITMAVAIL). The Cytoplasmic segment spans residues 365-384 (LRIDFERRLDTSHVIQREAA).

The protein belongs to the SEDS family. FtsW subfamily.

The protein resides in the cell inner membrane. It catalyses the reaction [GlcNAc-(1-&gt;4)-Mur2Ac(oyl-L-Ala-gamma-D-Glu-L-Lys-D-Ala-D-Ala)](n)-di-trans,octa-cis-undecaprenyl diphosphate + beta-D-GlcNAc-(1-&gt;4)-Mur2Ac(oyl-L-Ala-gamma-D-Glu-L-Lys-D-Ala-D-Ala)-di-trans,octa-cis-undecaprenyl diphosphate = [GlcNAc-(1-&gt;4)-Mur2Ac(oyl-L-Ala-gamma-D-Glu-L-Lys-D-Ala-D-Ala)](n+1)-di-trans,octa-cis-undecaprenyl diphosphate + di-trans,octa-cis-undecaprenyl diphosphate + H(+). It functions in the pathway cell wall biogenesis; peptidoglycan biosynthesis. Functionally, peptidoglycan polymerase that is essential for cell division. In Tolumonas auensis (strain DSM 9187 / NBRC 110442 / TA 4), this protein is Probable peptidoglycan glycosyltransferase FtsW.